The primary structure comprises 386 residues: Succinate--CoA ligase [ADP-forming] subunit beta (386 aa).

Positions Lys-9–Glu-244 constitute an ATP-grasp domain. ATP is bound by residues Lys-46, Gly-53–Gly-55, Glu-99, Ala-102, and Glu-107. Mg(2+) contacts are provided by Asn-199 and Asp-213. Substrate-binding positions include Asn-264 and Gly-321–Met-323.

This sequence belongs to the succinate/malate CoA ligase beta subunit family. Heterotetramer of two alpha and two beta subunits. Requires Mg(2+) as cofactor.

It carries out the reaction succinate + ATP + CoA = succinyl-CoA + ADP + phosphate. It catalyses the reaction GTP + succinate + CoA = succinyl-CoA + GDP + phosphate. The protein operates within carbohydrate metabolism; tricarboxylic acid cycle; succinate from succinyl-CoA (ligase route): step 1/1. In terms of biological role, succinyl-CoA synthetase functions in the citric acid cycle (TCA), coupling the hydrolysis of succinyl-CoA to the synthesis of either ATP or GTP and thus represents the only step of substrate-level phosphorylation in the TCA. The beta subunit provides nucleotide specificity of the enzyme and binds the substrate succinate, while the binding sites for coenzyme A and phosphate are found in the alpha subunit. This chain is Succinate--CoA ligase [ADP-forming] subunit beta, found in Bordetella avium (strain 197N).